A 276-amino-acid polypeptide reads, in one-letter code: 4-deoxy-L-threo-5-hexosulose-uronate ketol-isomerase 1 (276 aa).

Zn(2+) contacts are provided by His194, His196, Glu201, and His243.

Belongs to the KduI family. Requires Zn(2+) as cofactor.

It catalyses the reaction 5-dehydro-4-deoxy-D-glucuronate = 3-deoxy-D-glycero-2,5-hexodiulosonate. Its pathway is glycan metabolism; pectin degradation; 2-dehydro-3-deoxy-D-gluconate from pectin: step 4/5. In terms of biological role, catalyzes the isomerization of 5-dehydro-4-deoxy-D-glucuronate to 3-deoxy-D-glycero-2,5-hexodiulosonate. This Enterococcus faecalis (strain ATCC 700802 / V583) protein is 4-deoxy-L-threo-5-hexosulose-uronate ketol-isomerase 1 (kduI1).